The primary structure comprises 932 residues: Protein translocase subunit SecA (932 aa).

Residues Q83, 101–105 (GEGKT), and D491 contribute to the ATP site.

Belongs to the SecA family. Monomer and homodimer. Part of the essential Sec protein translocation apparatus which comprises SecA, SecYEG and auxiliary proteins SecDF. Other proteins may also be involved.

Its subcellular location is the cell inner membrane. It localises to the cellular thylakoid membrane. The protein resides in the cytoplasm. It carries out the reaction ATP + H2O + cellular proteinSide 1 = ADP + phosphate + cellular proteinSide 2.. In terms of biological role, part of the Sec protein translocase complex. Interacts with the SecYEG preprotein conducting channel. Has a central role in coupling the hydrolysis of ATP to the transfer of proteins into and across the cell membrane, serving as an ATP-driven molecular motor driving the stepwise translocation of polypeptide chains across the membrane. Its function is as follows. Probably participates in protein translocation into and across both the cytoplasmic and thylakoid membranes in cyanobacterial cells. This chain is Protein translocase subunit SecA, found in Cyanothece sp. (strain PCC 7425 / ATCC 29141).